We begin with the raw amino-acid sequence, 441 residues long: Ribosomal protein uS12 methylthiotransferase RimO (441 aa).

The 111-residue stretch at 7–117 (PKISFVSLGC…VLEAVHRALP (111 aa)) folds into the MTTase N-terminal domain. Residues Cys-16, Cys-52, Cys-81, Cys-148, Cys-152, and Cys-155 each contribute to the [4Fe-4S] cluster site. Residues 134-371 (LTPRHYAYLK…MARQQKISAR (238 aa)) form the Radical SAM core domain. In terms of domain architecture, TRAM spans 374-440 (KRKVGTRQQV…AYDLHGTVAG (67 aa)).

It belongs to the methylthiotransferase family. RimO subfamily. [4Fe-4S] cluster is required as a cofactor.

It localises to the cytoplasm. It carries out the reaction L-aspartate(89)-[ribosomal protein uS12]-hydrogen + (sulfur carrier)-SH + AH2 + 2 S-adenosyl-L-methionine = 3-methylsulfanyl-L-aspartate(89)-[ribosomal protein uS12]-hydrogen + (sulfur carrier)-H + 5'-deoxyadenosine + L-methionine + A + S-adenosyl-L-homocysteine + 2 H(+). Catalyzes the methylthiolation of an aspartic acid residue of ribosomal protein uS12. The chain is Ribosomal protein uS12 methylthiotransferase RimO from Rhodopseudomonas palustris (strain BisA53).